A 192-amino-acid polypeptide reads, in one-letter code: MELASGTTLVAPQPKGILDPATGKPIGSNDAFFGEINNELADKGFLVTSTDELITWARTGSLMWMTFGLACCAVEMMQMSMPRYDAERFGFAPRASPRQSDVMIVAGTLTNKMAPALRKVYDQMPEPRYVISMGSCANGGGYYHYSYSVVRGCDRVVPVDIYVPGCPPTAEALLYGVLLLQKKIRRTGTIER.

Residues C71, C72, C136, and C166 each coordinate [4Fe-4S] cluster.

The protein belongs to the complex I 20 kDa subunit family. As to quaternary structure, NDH-1 is composed of 14 different subunits. Subunits NuoB, C, D, E, F, and G constitute the peripheral sector of the complex. [4Fe-4S] cluster is required as a cofactor.

The protein resides in the cell inner membrane. The catalysed reaction is a quinone + NADH + 5 H(+)(in) = a quinol + NAD(+) + 4 H(+)(out). Functionally, NDH-1 shuttles electrons from NADH, via FMN and iron-sulfur (Fe-S) centers, to quinones in the respiratory chain. The immediate electron acceptor for the enzyme in this species is believed to be ubiquinone. Couples the redox reaction to proton translocation (for every two electrons transferred, four hydrogen ions are translocated across the cytoplasmic membrane), and thus conserves the redox energy in a proton gradient. This is NADH-quinone oxidoreductase subunit B from Sinorhizobium medicae (strain WSM419) (Ensifer medicae).